The following is a 526-amino-acid chain: 2-isopropylmalate synthase (526 aa).

The Pyruvate carboxyltransferase domain occupies 5-267 (VIIFDTTLRD…HTGIRHQEIY (263 aa)). Mn(2+) is bound by residues aspartate 14, histidine 202, histidine 204, and asparagine 238. Residues 393–526 (RLEYFSVQSG…VPSISTSSTH (134 aa)) are regulatory domain.

It belongs to the alpha-IPM synthase/homocitrate synthase family. LeuA type 1 subfamily. In terms of assembly, homodimer. Mn(2+) is required as a cofactor.

It localises to the cytoplasm. The enzyme catalyses 3-methyl-2-oxobutanoate + acetyl-CoA + H2O = (2S)-2-isopropylmalate + CoA + H(+). It functions in the pathway amino-acid biosynthesis; L-leucine biosynthesis; L-leucine from 3-methyl-2-oxobutanoate: step 1/4. In terms of biological role, catalyzes the condensation of the acetyl group of acetyl-CoA with 3-methyl-2-oxobutanoate (2-ketoisovalerate) to form 3-carboxy-3-hydroxy-4-methylpentanoate (2-isopropylmalate). In Edwardsiella ictaluri (strain 93-146), this protein is 2-isopropylmalate synthase.